A 327-amino-acid chain; its full sequence is Inactive peptidyl-prolyl cis-trans isomerase FKBP6 (327 aa).

Residues 1-20 (MSVFSRLRNGIPPSRDDCQS) form a disordered region. One can recognise a PPIase FKBP-type domain in the interval 54–143 (DASVLVKYSG…LFEIELIDFL (90 aa)). TPR repeat units lie at residues 171–204 (AATE…LHRR), 219–252 (LLVL…DKRN), and 253–286 (AKAL…QPCN).

The protein belongs to the FKBP6 family. As to quaternary structure, interacts with HSP72/HSPA2 and CLTC. Interacts with GAPDH; leading to inhibit GAPDH catalytic activity. Interacts (via TPR repeats) with HSP90.

Its subcellular location is the cytoplasm. The protein resides in the cytosol. It localises to the nucleus. It is found in the chromosome. Functionally, co-chaperone required during spermatogenesis to repress transposable elements and prevent their mobilization, which is essential for the germline integrity. Acts via the piRNA metabolic process, which mediates the repression of transposable elements during meiosis by forming complexes composed of piRNAs and Piwi proteins and govern the methylation and subsequent repression of transposons. Acts as a co-chaperone via its interaction with HSP90 and is required for the piRNA amplification process, the secondary piRNA biogenesis. May be required together with HSP90 in removal of 16 nucleotide ping-pong by-products from Piwi complexes, possibly facilitating turnover of Piwi complexes. The sequence is that of Inactive peptidyl-prolyl cis-trans isomerase FKBP6 (Fkbp6) from Rattus norvegicus (Rat).